Consider the following 627-residue polypeptide: Myelin-associated glycoprotein (627 aa).

The signal sequence occupies residues 1–19 (MIFLATLPLFWIMISASRG). Residues 20 to 325 (GHWGAWMPST…RTVELSVMYA (306 aa)) form an interaction with RTN4R and RTN4RL2 region. Topologically, residues 20–516 (GHWGAWMPST…HRLMWAKIGP (497 aa)) are extracellular. Residue W22 is glycosylated (C-linked (Man) tryptophan). The Ig-like V-type domain occupies 22–120 (WGAWMPSTIS…LGGKYYFRGD (99 aa)). 3 cysteine pairs are disulfide-bonded: C37/C165, C42/C100, and C159/C217. 65-67 (YPK) is an a ganglioside GT1b (d18:1(4E)) binding site. A glycan (N-linked (GlcNAc...) asparagine) is linked at N99. A ganglioside GT1b (d18:1(4E)) is bound by residues R118 and 124-128 (YNQYT). Ig-like C2-type domains follow at residues 139-237 (NTPN…LDVK), 241-325 (VIVE…VMYA), 327-412 (WKPT…VEFA), and 413-508 (PIIL…GAHR). N223 and N246 each carry an N-linked (GlcNAc...) asparagine glycan. Cysteines 261 and 305 form a disulfide. N315 and N332 each carry an N-linked (GlcNAc...) asparagine glycan. C347 and C392 are oxidised to a cystine. A glycan (N-linked (GlcNAc...) asparagine) is linked at N406. 2 disulfides stabilise this stretch: C421–C430 and C432–C488. Residues N450 and N454 are each glycosylated (N-linked (GlcNAc...) asparagine). The chain crosses the membrane as a helical span at residues 517 to 536 (VGAVVAFAILIAIVCYITQT). A lipid anchor (S-palmitoyl cysteine) is attached at C531. The Cytoplasmic portion of the chain corresponds to 537-627 (RRKKNVTESS…LAEYAEIRVK (91 aa)). Residues S545, S547, S549, and S591 each carry the phosphoserine modification. The required for normal axon myelination in the central nervous system stretch occupies residues 578–627 (LGSERRLLGLRGESPELDLSYSHSDLGKRPTKDSYTLTEELAEYAEIRVK).

This sequence belongs to the immunoglobulin superfamily. SIGLEC (sialic acid binding Ig-like lectin) family. As to quaternary structure, monomer and homodimer. Interacts (via the first three N-terminal Ig-like domains) with RTN4R and RTN4RL2. Interacts with isoform 2 of BSG. Post-translationally, N-glycosylated. Phosphorylated on tyrosine residues. In terms of processing, ubiquitinated, leading to proteasomal degradation. Detected in the myelin tract in brain, especially in the corpus callosum and in peripheral nerve. Expressed by myelinating glial cells in the central and peripheral nervous system. Detected in oligodendrocyte processes before formation of compact myelin. Restricted to the periaxonal space after myelination. Isoform S-MAG is the predominant isoform in CNS and PNS of the adult (at protein level).

The protein resides in the cell membrane. Its subcellular location is the membrane raft. Adhesion molecule that mediates interactions between myelinating cells and neurons by binding to neuronal sialic acid-containing gangliosides and to the glycoproteins RTN4R and RTN4RL2. Not required for initial myelination, but seems to play a role in the maintenance of normal axon myelination. Protects motoneurons against apoptosis, also after injury; protection against apoptosis is probably mediated via interaction with neuronal RTN4R and RTN4RL2. Required to prevent degeneration of myelinated axons in adults; this probably depends on binding to gangliosides on the axon cell membrane. Negative regulator of neurite outgrowth that inhibits axon longitudinal growth. Negative regulator of neurite outgrowth; in dorsal root ganglion neurons the inhibition is mediated primarily via binding to neuronal RTN4R or RTN4RL2 and to a lesser degree via binding to neuronal gangliosides. In cerebellar granule cells the inhibition is mediated via binding to neuronal gangliosides. In sensory neurons, inhibition of neurite extension depends only partially on RTN4R, RTN4RL2 and gangliosides. Inhibits axon outgrowth by binding to RTN4R. Preferentially binds to alpha-2,3-linked sialic acid. Binds ganglioside Gt1b. The polypeptide is Myelin-associated glycoprotein (Mag) (Mus musculus (Mouse)).